A 328-amino-acid chain; its full sequence is Phosphoserine phosphatase (328 aa).

Asp-113 functions as the Nucleophile in the catalytic mechanism. Mg(2+) contacts are provided by Asp-113 and Asp-115. The active-site Proton donor is Asp-115. Substrate-binding positions include Glu-122, Arg-158, 201 to 202, and Lys-246; that span reads SG. Asp-269 contacts Mg(2+). Asn-272 is a substrate binding site.

This sequence belongs to the HAD-like hydrolase superfamily. SerB family. The cofactor is Mg(2+).

The enzyme catalyses O-phospho-L-serine + H2O = L-serine + phosphate. It carries out the reaction O-phospho-D-serine + H2O = D-serine + phosphate. It functions in the pathway amino-acid biosynthesis; L-serine biosynthesis; L-serine from 3-phospho-D-glycerate: step 3/3. The sequence is that of Phosphoserine phosphatase from Vibrio cholerae serotype O1 (strain ATCC 39315 / El Tor Inaba N16961).